We begin with the raw amino-acid sequence, 489 residues long: UDP-N-acetylmuramate--L-alanine ligase (489 aa).

128 to 134 (GTHGKTT) is a binding site for ATP.

Belongs to the MurCDEF family.

The protein resides in the cytoplasm. The catalysed reaction is UDP-N-acetyl-alpha-D-muramate + L-alanine + ATP = UDP-N-acetyl-alpha-D-muramoyl-L-alanine + ADP + phosphate + H(+). The protein operates within cell wall biogenesis; peptidoglycan biosynthesis. Cell wall formation. This is UDP-N-acetylmuramate--L-alanine ligase from Shewanella pealeana (strain ATCC 700345 / ANG-SQ1).